We begin with the raw amino-acid sequence, 771 residues long: DNA helicase/primase complex-associated protein (771 aa).

This sequence belongs to the herpesviridae HEPA family. Associates with the primase and the helicase to form the helicase-primase complex. Interacts with the origin-binding protein. Interacts with the polymerase catalytic subunit.

It is found in the host nucleus. Its function is as follows. Component of the helicase/primase complex. Unwinds the DNA at the replication forks and generates single-stranded DNA for both leading and lagging strand synthesis. The primase synthesizes short RNA primers on the lagging strand that the polymerase presumably elongates using dNTPs. The primase-associated factor has no known catalytic activity in the complex and may serve to facilitate the formation of the replisome by directly interacting with the origin-binding protein and the polymerase. The protein is DNA helicase/primase complex-associated protein of Varicella-zoster virus (strain Oka vaccine) (HHV-3).